We begin with the raw amino-acid sequence, 414 residues long: Carboxynorspermidine synthase (414 aa).

It belongs to the saccharopine dehydrogenase family. Carboxynorspermidine synthase subfamily. Homodimer.

The catalysed reaction is carboxynorspermidine + NADP(+) + H2O = L-aspartate 4-semialdehyde + propane-1,3-diamine + NADPH + H(+). The enzyme catalyses carboxyspermidine + NADP(+) + H2O = L-aspartate 4-semialdehyde + putrescine + NADPH + H(+). Activated by dithiothreitol and inhibited by SH-reactive compounds. Involved in norspermidine biosynthesis. Catalyzes the synthesis of carboxynorspermidine from L-aspartate 4-semialdehyde and 1,3-diaminopropane. Is also slightly active with putrescine as a substrate. In Vibrio alginolyticus (strain ATCC 17749 / DSM 2171 / NBRC 15630 / NCIMB 1903 / NCTC 12160 / XII-53), this protein is Carboxynorspermidine synthase.